Here is a 154-residue protein sequence, read N- to C-terminus: Protein X (154 aa).

The interval proline 68–phenylalanine 117 is mitochondrial targeting sequence.

It belongs to the orthohepadnavirus protein X family. In terms of assembly, may form homodimer. May interact with host CEBPA, CFLAR, CREB1, DDB1, E4F1, HBXIP, HSPD1/HSP60, NFKBIA, POLR2E and SMAD4. Interacts with host SMC5-SMC6 complex and induces its degradation. Interacts with host TRPC4AP; leading to prevent ubiquitination of TRPC4AP. Interacts with host PLSCR1; this interaction promotes ubiquitination and degradation of HBx and impairs HBx-mediated cell proliferation. Post-translationally, a fraction may be phosphorylated in insect cells and HepG2 cells, a human hepatoblastoma cell line. Phosphorylated in vitro by host protein kinase C or mitogen-activated protein kinase. N-acetylated in insect cells.

It localises to the host cytoplasm. The protein resides in the host nucleus. The protein localises to the host mitochondrion. Its function is as follows. Multifunctional protein that plays a role in silencing host antiviral defenses and promoting viral transcription. Does not seem to be essential for HBV infection. May be directly involved in development of cirrhosis and liver cancer (hepatocellular carcinoma). Most of cytosolic activities involve modulation of cytosolic calcium. The effect on apoptosis is controversial depending on the cell types in which the studies have been conducted. May induce apoptosis by localizing in mitochondria and causing loss of mitochondrial membrane potential. May also modulate apoptosis by binding host CFLAR, a key regulator of the death-inducing signaling complex (DISC). Promotes viral transcription by using the host E3 ubiquitin ligase DDB1 to target the SMC5-SMC6 complex to proteasomal degradation. This host complex would otherwise bind to viral episomal DNA, and prevents its transcription. Moderately stimulates transcription of many different viral and cellular transcription elements. Promoters and enhancers stimulated by HBx contain DNA binding sites for NF-kappa-B, AP-1, AP-2, c-EBP, ATF/CREB, or the calcium-activated factor NF-AT. The chain is Protein X from Hepatitis B virus genotype B1 (isolate Japan/Yamagata-2/1998) (HBV-B).